Here is a 271-residue protein sequence, read N- to C-terminus: MFSIQQPLLVFSDLDGTLLDSHSYDWQPTALWLSRLREANVPVILCSSKTSAEMLYLQKTLGLQGLPLIAENGAVIQLAEQWQDIDGFPRIISGISHGEISQVLNTLREKEHFKFTTFDDVDDATIAEWTGLSRSQAALTQLHEASVTLIWRDSDERMAQFTARLNELGLQFMQGARFWHVLDASAGKDQAANWIIATYQQLSGKRPTTLGLGDGPNDAPLLEVMDYAVIVKGLNREGVHLHDEDPTRVWRTQREGPEGWREGLDHFFSAR.

Asp13 serves as the catalytic Nucleophile. Residues Asp13, Asp15, and Asp214 each contribute to the Mg(2+) site.

This sequence belongs to the HAD-like hydrolase superfamily. MPGP family. Mg(2+) is required as a cofactor.

The protein resides in the cytoplasm. It carries out the reaction 2-O-(alpha-D-mannosyl)-3-phosphoglycerate + H2O = (2R)-2-O-(alpha-D-mannosyl)-glycerate + phosphate. The polypeptide is Mannosyl-3-phosphoglycerate phosphatase (yedP) (Shigella sonnei (strain Ss046)).